We begin with the raw amino-acid sequence, 497 residues long: Long chain base biosynthesis protein 2c (497 aa).

Residues 4-24 form a helical membrane-spanning segment; it reads VPFVTAVTTVFSYGVIFGFGH. Lys-319 carries the N6-(pyridoxal phosphate)lysine modification.

It belongs to the class-II pyridoxal-phosphate-dependent aminotransferase family. In terms of assembly, heterodimer with LCB1. Component of the serine palmitoyltransferase (SPT) complex, composed of LCB1 and LCB2. Requires pyridoxal 5'-phosphate as cofactor.

It is found in the endoplasmic reticulum membrane. It carries out the reaction L-serine + hexadecanoyl-CoA + H(+) = 3-oxosphinganine + CO2 + CoA. Its pathway is lipid metabolism; sphingolipid metabolism. Functionally, serine palmitoyltransferase (SPT). The heterodimer formed with LCB1 constitutes the catalytic core. The sequence is that of Long chain base biosynthesis protein 2c from Oryza sativa subsp. japonica (Rice).